We begin with the raw amino-acid sequence, 336 residues long: L-Ala-D/L-amino acid epimerase (336 aa).

Residues T130 and 152-154 contribute to the substrate site; that span reads KIK. Residues D178, E204, and D229 each coordinate Mg(2+). Residues K251 and 301-303 contribute to the substrate site; that span reads DMD.

It belongs to the mandelate racemase/muconate lactonizing enzyme family. The cofactor is Mg(2+).

Catalyzes the epimerization of D-Ala-D-Ala to D-Ala-L-Ala. Has broad substrate specificity and catalyzes the epimerization of a variety of dipeptides containing an N-terminal Ala followed by Ser, Thr, Val, Met, His, Phe or Trp (in vitro). The polypeptide is L-Ala-D/L-amino acid epimerase (Flavobacterium johnsoniae (strain ATCC 17061 / DSM 2064 / JCM 8514 / BCRC 14874 / CCUG 350202 / NBRC 14942 / NCIMB 11054 / UW101) (Cytophaga johnsonae)).